Consider the following 350-residue polypeptide: S-adenosylmethionine:tRNA ribosyltransferase-isomerase (350 aa).

Belongs to the QueA family. As to quaternary structure, monomer.

It is found in the cytoplasm. The catalysed reaction is 7-aminomethyl-7-carbaguanosine(34) in tRNA + S-adenosyl-L-methionine = epoxyqueuosine(34) in tRNA + adenine + L-methionine + 2 H(+). It functions in the pathway tRNA modification; tRNA-queuosine biosynthesis. Its function is as follows. Transfers and isomerizes the ribose moiety from AdoMet to the 7-aminomethyl group of 7-deazaguanine (preQ1-tRNA) to give epoxyqueuosine (oQ-tRNA). The sequence is that of S-adenosylmethionine:tRNA ribosyltransferase-isomerase from Bacillus cereus (strain ZK / E33L).